A 359-amino-acid chain; its full sequence is 4-galactosyl-N-acetylglucosaminide 3-alpha-L-fucosyltransferase 9 (359 aa).

Residues 1–11 are Cytoplasmic-facing; sequence MTSTSKGILRP. The chain crosses the membrane as a helical; Signal-anchor for type II membrane protein span at residues 12-32; it reads FLIVCIILGCFVACLLIYIKP. At 33–359 the chain is on the lumenal side; that stretch reads TNSWVFSPME…VGNLEKWFWN (327 aa). N62 carries N-linked (GlcNAc...) asparagine glycosylation. Residues 63–168 are acceptor-binding; sequence ETTILVWVWP…RRDSDIQVPY (106 aa). Q75 contributes to the a beta-D-galactosyl-(1-&gt;4)-N-acetyl-beta-D-glucosaminyl derivative binding site. Disulfide bonds link C82/C335, C91/C338, and C190/C238. N-linked (GlcNAc...) asparagine glycosylation is present at N101. A beta-D-galactosyl-(1-&gt;4)-N-acetyl-beta-D-glucosaminyl derivative is bound at residue E137. E137 acts as the Nucleophile in catalysis. E137 is a binding site for GDP-beta-L-fucose. N153 carries N-linked (GlcNAc...) asparagine glycosylation. Residues Y168, V192, S194, N195, R202, V226, Y241, N246, Y252, E255, and K256 each coordinate GDP-beta-L-fucose. The tract at residues 169-326 is donor-binding; it reads GFLTVSTSPF…NWRKDFTVNL (158 aa). The interval 327-359 is acceptor-binding; it reads PRFWESHACLACDHVKRHQEYKSVGNLEKWFWN.

The protein belongs to the glycosyltransferase 10 family. Homodimer. In terms of processing, N-glycosylated with complex-type N-glycans.

It localises to the golgi apparatus. Its subcellular location is the trans-Golgi network membrane. The protein resides in the golgi apparatus membrane. The catalysed reaction is a beta-D-galactosyl-(1-&gt;4)-N-acetyl-beta-D-glucosaminyl derivative + GDP-beta-L-fucose = a beta-D-galactosyl-(1-&gt;4)-[alpha-L-fucosyl-(1-&gt;3)]-N-acetyl-beta-D-glucosaminyl derivative + GDP + H(+). It carries out the reaction an alpha-Neu5Ac-(2-&gt;3)-beta-D-Gal-(1-&gt;4)-beta-D-GlcNAc-(1-&gt;3)-beta-D-Gal-(1-&gt;4)-beta-D-GlcNAc derivative + GDP-beta-L-fucose = an alpha-Neu5Ac-(2-&gt;3)-beta-D-Gal-(1-&gt;4)-beta-D-GlcNAc-(1-&gt;3)-beta-D-Gal-(1-&gt;4)-[alpha-L-Fuc-(1-&gt;3)]-beta-D-GlcNAc derivative + GDP + H(+). It catalyses the reaction alpha-N-glycoloylneuraminosyl-(2-&gt;3)-beta-D-galactosyl-(1-&gt;4)-N-acetyl-beta-D-glucosaminyl-(1-&gt;3)-beta-D-galactosyl-(1-&gt;4)-N-acetyl-beta-D-glucosaminyl-(1-&gt;3)-beta-D-galactosyl-(1-&gt;4)-beta-D-glucosyl-(1&lt;-&gt;1')-ceramide + GDP-beta-L-fucose = alpha-N-glycoloylneuraminosyl-(2-&gt;3)-beta-D-galactosyl-(1-&gt;4)-N-acetyl-beta-D-glucosaminyl-(1-&gt;3)-beta-D-galactosyl-(1-&gt;4)-[alpha-L-fucosyl-(1-&gt;3)]-N-acetyl-beta-D-glucosaminyl-(1-&gt;3)-beta-D-galactosyl-(1-&gt;4)-beta-D-glucosyl-(1&lt;-&gt;1')-ceramide + GDP + H(+). The enzyme catalyses alpha-D-galactosyl-(1-&gt;3)-beta-D-galactosyl-(1-&gt;4)-N-acetyl-beta-D-glucosaminyl-(1-&gt;3)-beta-D-galactosyl-(1-&gt;4)-beta-D-glucosyl-(1&lt;-&gt;1')-ceramide + GDP-beta-L-fucose = a neolactoside IV(3)-alpha-Gal,III(3)-alpha-Fuc-nLc4Cer + GDP + H(+). The catalysed reaction is a neolactoside nLc4Cer + GDP-beta-L-fucose = a neolactoside III(3)-alpha-Fuc-nLc4Cer + GDP + H(+). It carries out the reaction an N-acetyl-alpha-neuraminyl-(2-&gt;3)-beta-D-galactosyl-(1-&gt;4)-N-acetyl-beta-D-glucosaminyl derivative + GDP-beta-L-fucose = an alpha-Neu5Ac-(2-&gt;3)-beta-D-Gal-(1-&gt;4)-[alpha-L-Fuc-(1-&gt;3)]-beta-D-GlcNAc derivative + GDP + H(+). It catalyses the reaction beta-D-Gal-(1-&gt;4)-beta-D-GlcNAc-(1-&gt;3)-beta-D-Gal-(1-&gt;4)-D-Glc + GDP-beta-L-fucose = beta-D-Gal-(1-&gt;4)-[alpha-L-Fuc-(1-&gt;3)]-beta-D-GlcNAc-(1-&gt;3)-beta-D-Gal-(1-&gt;4)-D-Glc + GDP + H(+). The enzyme catalyses an alpha-L-Fuc-(1-&gt;2)-beta-D-Gal-(1-&gt;4)-beta-D-GlcNAc derivative + GDP-beta-L-fucose = an alpha-L-Fuc-(1-&gt;2)-beta-D-Gal-(1-&gt;4)-[alpha-L-Fuc-(1-&gt;3)]-beta-D-GlcNAc derivative + GDP + H(+). The protein operates within protein modification; protein glycosylation. It participates in glycolipid biosynthesis. Its activity is regulated as follows. Activated by Mn2+. Catalyzes alpha(1-&gt;3) linkage of fucosyl moiety transferred from GDP-beta-L-fucose to N-acetyl glucosamine (GlcNAc) within type 2 lactosamine (LacNAc, beta-D-Gal-(1-&gt;4)-beta-D-GlcNAc-) glycan attached to glycolipids and N- or O-linked glycoproteins. Fucosylates distal type 2 LacNAc and its fucosylated (H-type 2 LacNAc) and sialylated (sialyl-type 2 LacNAc) derivatives to form Lewis x (Lex) (CD15) and Lewis y (Ley) antigenic epitopes involved in cell adhesion and differentiation. Generates Lex epitopes in the brain, presumably playing a role in the maintenance of neuronal stemness and neurite outgrowth in progenitor neural cells. Fucosylates the internal type 2 LacNAc unit of the polylactosamine chain to form VIM-2 antigen that serves as recognition epitope for SELE. Can also modify milk oligosaccharides in particular type 2 tetrasaccharide LNnT. This chain is 4-galactosyl-N-acetylglucosaminide 3-alpha-L-fucosyltransferase 9, found in Rattus norvegicus (Rat).